Reading from the N-terminus, the 38-residue chain is Photosystem II reaction center protein L (38 aa).

Residues Ser-17–Phe-37 form a helical membrane-spanning segment.

It belongs to the PsbL family. PSII is composed of 1 copy each of membrane proteins PsbA, PsbB, PsbC, PsbD, PsbE, PsbF, PsbH, PsbI, PsbJ, PsbK, PsbL, PsbM, PsbT, PsbY, PsbZ, Psb30/Ycf12, at least 3 peripheral proteins of the oxygen-evolving complex and a large number of cofactors. It forms dimeric complexes.

Its subcellular location is the plastid. It localises to the chloroplast thylakoid membrane. Its function is as follows. One of the components of the core complex of photosystem II (PSII). PSII is a light-driven water:plastoquinone oxidoreductase that uses light energy to abstract electrons from H(2)O, generating O(2) and a proton gradient subsequently used for ATP formation. It consists of a core antenna complex that captures photons, and an electron transfer chain that converts photonic excitation into a charge separation. This subunit is found at the monomer-monomer interface and is required for correct PSII assembly and/or dimerization. The protein is Photosystem II reaction center protein L of Cyanidium caldarium (Red alga).